The chain runs to 366 residues: D-alanine--D-alanine ligase (366 aa).

One can recognise an ATP-grasp domain in the interval 145–348 (KRLLDDAGLA…YQSLITKLIE (204 aa)). Residue 175-230 (VEQLGLPLFIKPANLGSSVGISKVNNEAEFNAALSMAFEYDLKVIIESAIVGREIE) coordinates ATP. Mg(2+) contacts are provided by Asp302, Glu315, and Asn317.

It belongs to the D-alanine--D-alanine ligase family. Mg(2+) is required as a cofactor. The cofactor is Mn(2+).

Its subcellular location is the cytoplasm. The enzyme catalyses 2 D-alanine + ATP = D-alanyl-D-alanine + ADP + phosphate + H(+). It functions in the pathway cell wall biogenesis; peptidoglycan biosynthesis. In terms of biological role, cell wall formation. The polypeptide is D-alanine--D-alanine ligase (Proteus mirabilis (strain HI4320)).